Consider the following 287-residue polypeptide: Pol-RFamide neuropeptides (287 aa).

The signal sequence occupies residues 1–21 (MNLITLLVLGVSTCLIYGIEA). Residues 22 to 52 (DEKTSSALENEIVEILNGNFKNEKKSIETSD) constitute a propeptide that is removed on maturation. A Pyrrolidone carboxylic acid modification is found at Q53. F59 is subject to Phenylalanine amide. A propeptide spanning residues 62–64 (EVN) is cleaved from the precursor. Q65 bears the Pyrrolidone carboxylic acid mark. The residue at position 71 (F71) is a Phenylalanine amide. The propeptide occupies 74–77 (ELSD). At Q78 the chain carries Pyrrolidone carboxylic acid. F84 carries the phenylalanine amide modification. The propeptide occupies 87 to 90 (ELSD). Q91 is modified (pyrrolidone carboxylic acid). At F97 the chain carries Phenylalanine amide. Positions 100–103 (EVLD) are excised as a propeptide. At Q104 the chain carries Pyrrolidone carboxylic acid. F110 bears the Phenylalanine amide mark. A propeptide spanning residues 113-116 (DASN) is cleaved from the precursor. Q117 carries the pyrrolidone carboxylic acid modification. F123 is modified (phenylalanine amide). Positions 126–129 (ELSD) are excised as a propeptide. Pyrrolidone carboxylic acid is present on Q130. Position 136 is a phenylalanine amide (F136). The propeptide occupies 139–142 (EGSN). Residue Q143 is modified to Pyrrolidone carboxylic acid. A Phenylalanine amide modification is found at F149. Residues 152–168 (EASKNDLEKQNGRGDSD) constitute a propeptide that is removed on maturation. Residue Q169 is modified to Pyrrolidone carboxylic acid. A Phenylalanine amide modification is found at F175. Positions 178-181 (EARK) are excised as a propeptide. Residue Q182 is modified to Pyrrolidone carboxylic acid. A Phenylalanine amide modification is found at F188. A propeptide spanning residues 192–194 (DMN) is cleaved from the precursor. Q195 carries the pyrrolidone carboxylic acid modification. At H201 the chain carries Histidine amide. The propeptide occupies 204 to 207 (ETSD). Q208 is subject to Pyrrolidone carboxylic acid. F214 carries the phenylalanine amide modification. Positions 217–220 (QLSD) are excised as a propeptide. Residue Q221 is modified to Pyrrolidone carboxylic acid. At F227 the chain carries Phenylalanine amide. Residues 229–267 (REVKNDKNNPFRSRYTGDSTQLQRENNQPIEELRDNTEK) form a disordered region. A propeptide spanning residues 230–287 (EVKNDKNNPFRSRYTGDSTQLQRENNQPIEELRDNTEKVSIENKPIMKKTSVKISKTV) is cleaved from the precursor. Positions 238 to 257 (PFRSRYTGDSTQLQRENNQP) are enriched in polar residues.

This sequence belongs to the FARP (FMRFamide related peptide) family. In terms of processing, the N-terminal processing sites of the Pol-RFamide peptides are acidic suggesting that cniderian nervous systems may use a variety of unconventional processing procedures.

The protein localises to the secreted. Functionally, has direct action on motoneurons, and effect includes transient inhibition followed by prolonged excitation. The protein is Pol-RFamide neuropeptides of Polyorchis penicillatus (Hydromedusa).